A 71-amino-acid polypeptide reads, in one-letter code: UPF0346 protein SPP_0954 (71 aa).

This sequence belongs to the UPF0346 family.

The chain is UPF0346 protein SPP_0954 from Streptococcus pneumoniae (strain P1031).